A 365-amino-acid chain; its full sequence is Forkhead box protein E4 (365 aa).

A compositionally biased stretch (basic and acidic residues) spans 1–13 (MDSPDSVRVKCES). The tract at residues 1 to 46 (MDSPDSVRVKCESKGSCSPEEGLNNGLPEEHNQASGGRRRKRPVQR) is disordered. Residues 48-142 (KPPYSYIALI…DNGSFLRRRK (95 aa)) constitute a DNA-binding region (fork-head).

First expressed at the end of gastrulation (stage 13) in the anterior ectodermal placode. During intermediate neural plate stages (stages 14-16), expression expands to the presumptive nasal ectoderm (PNE) and the presumptive lens ectoderm (PLE). By stages 18-21, expression begins to deplete in the PNE, while intensifying in the PLE so that by late neural stages (stages 22), expression is restricted to the PLE. Throughout tailbud stages (stage 23-31), expression is maintained in the lens placode and lens vesicle. In the maturing lens (stage 32-onwards), expression is restricted to the anterior lens epithelium, where it remains during the tadpole stage. In tadpoles there is additional expression in the ventral midline of the pharynx. Expression continues in the adult eye.

It localises to the nucleus. Probable transcription factor. Mediates lens formation in the embryo by promoting the proliferation of the specified lens ectoderm and suppressing its terminal differentiation. The sequence is that of Forkhead box protein E4 from Xenopus laevis (African clawed frog).